Consider the following 641-residue polypeptide: Pre-mRNA-processing factor 39 (641 aa).

Positions 1 to 50 are disordered; that stretch reads MEKSPEHCAEGSPSPATESAPSATEPPLPSTEPPLPSTEPPLPSTEPPLP. Residues 10–23 are compositionally biased toward low complexity; it reads EGSPSPATESAPSA. Over residues 24-50 the composition is skewed to pro residues; it reads TEPPLPSTEPPLPSTEPPLPSTEPPLP. 7 HAT repeats span residues 50–82, 84–116, 118–150, 158–193, 304–336, 338–370, and 372–407; these read PPLPPDFEKYWKSVQAYPEDFNTWTYLLQYVEQ, NHLFAARKAFDAFLAHYPYCYGYWKKYADLEKK, NNILEADEVYRRGIQAITLSVDLWMHYLNFLKE, ETSLTLRGTFEHAVVSAGLDFRSDKLWEMYINWETE, NFEEEIKRPYFHVKPLEKAQLNNWKEYLEFELE, GSNERIVILFERCVIACACYEEFWIKYAKYMEN, and SVEGVRHVYNRACHVHLAKKPMVHLLWAAFEEQQGN.

It belongs to the PRP39 family.

Its subcellular location is the nucleus. Functionally, involved in pre-mRNA splicing. The protein is Pre-mRNA-processing factor 39 (prpf39) of Xenopus laevis (African clawed frog).